We begin with the raw amino-acid sequence, 896 residues long: DNA mismatch repair protein MutS (896 aa).

599–606 (GPNMAGKS) contributes to the ATP binding site.

The protein belongs to the DNA mismatch repair MutS family.

In terms of biological role, this protein is involved in the repair of mismatches in DNA. It is possible that it carries out the mismatch recognition step. This protein has a weak ATPase activity. The chain is DNA mismatch repair protein MutS from Geobacillus kaustophilus (strain HTA426).